Consider the following 316-residue polypeptide: Ribosomal protein L11 methyltransferase (316 aa).

4 residues coordinate S-adenosyl-L-methionine: Thr-161, Gly-182, Asp-204, and Asn-249.

This sequence belongs to the methyltransferase superfamily. PrmA family.

It is found in the cytoplasm. The catalysed reaction is L-lysyl-[protein] + 3 S-adenosyl-L-methionine = N(6),N(6),N(6)-trimethyl-L-lysyl-[protein] + 3 S-adenosyl-L-homocysteine + 3 H(+). Its function is as follows. Methylates ribosomal protein L11. The protein is Ribosomal protein L11 methyltransferase of Ruminiclostridium cellulolyticum (strain ATCC 35319 / DSM 5812 / JCM 6584 / H10) (Clostridium cellulolyticum).